A 557-amino-acid polypeptide reads, in one-letter code: Laccase-11 (557 aa).

The N-terminal stretch at 1 to 23 (MKMGFLFLFCYLLAFLGYSPVDA) is a signal peptide. 2 Plastocyanin-like domains span residues 31–147 (DVQV…PAPG) and 158–308 (ESNI…YKGV). N-linked (GlcNAc...) asparagine glycans are attached at residues Asn-36, Asn-69, and Asn-77. Residues His-81 and His-83 each coordinate Cu cation. The N-linked (GlcNAc...) asparagine glycan is linked to Asn-115. Positions 126 and 128 each coordinate Cu cation. 8 N-linked (GlcNAc...) asparagine glycosylation sites follow: Asn-240, Asn-296, Asn-323, Asn-371, Asn-381, Asn-398, Asn-416, and Asn-440. In terms of domain architecture, Plastocyanin-like 3 spans 406–541 (DFPDRPPKAF…KMAFVVENGE (136 aa)). His-458, His-461, His-463, His-520, Cys-521, His-522, and His-526 together coordinate Cu cation.

Belongs to the multicopper oxidase family. The cofactor is Cu cation. As to expression, ubiquitous and constitutive.

The protein localises to the secreted. It localises to the extracellular space. Its subcellular location is the apoplast. It carries out the reaction 4 hydroquinone + O2 = 4 benzosemiquinone + 2 H2O. In terms of biological role, lignin degradation and detoxification of lignin-derived products. This is Laccase-11 (LAC11) from Arabidopsis thaliana (Mouse-ear cress).